The following is a 430-amino-acid chain: Sesquiterpene synthase Agr5 (430 aa).

The first 25 residues, Met1–Ser25, serve as a signal peptide directing secretion. An N-linked (GlcNAc...) asparagine glycan is attached at Asn113. Mg(2+) contacts are provided by Asp176, Asn311, Ser315, and Glu319. Residues Asp176–Asp180 carry the DDXXD motif motif. 2 residues coordinate (2E,6E)-farnesyl diphosphate: Arg401 and Tyr402.

It belongs to the terpene synthase family. Requires Mg(2+) as cofactor.

It carries out the reaction (2E,6E)-farnesyl diphosphate = viridiflorene + diphosphate. Functionally, terpene cyclase that catalyzes the cyclization of farnesyl diphosphate (FPP) to viridiflorene and viridiflorol. The sequence is that of Sesquiterpene synthase Agr5 from Cyclocybe aegerita (Black poplar mushroom).